Here is a 585-residue protein sequence, read N- to C-terminus: MPTALCPRVLAPKESEEPRKMRSPPGENPSPQGEPPSPESSRRLFRRFRYQEAAGPREALQRLWELCRGWLRLERHTKEQILELLVLEQFLAILPWEIQSWVRAQEPESGEQAVAAVEALEREPGRPWQWLKHCEDPVVIDDGDGPAAPQDLEQERMSAESQSYPDAPPGALVQGTGLLSRSPGQPSEDLVPQDAFVVQEQSIRDAQPVATCQLPPNRVSPFKDMILCFSEEDWSLLDPAQTGFYGEFIIGEDYAVSMPPNEPPVQPGHSHEEENGLRVTEWTTDLQDKEIPQASCLDLSSLQPFQGEERRKWEELQVPELQPCPQVVLSQSPCPAGGDPPALKSSLDQEVTIEIVLSSSGDEDSQHSPYCTEELRSPPEDLHSVPAHQSNASAEGEVQTSQKSYVCPNCGKIFRWRVNFIRHLRSRREQKPHKCSVCGELFSDSEDLDGHLETHEAQKPYRCTACGKSFRLNSHLISHRRIHLQPASQQPMKKSEEEALETEGTGASDLLEKSKAKLSFQCGDCEKSFQRHDHLVRHRRHCHLKDETRPFQCRYCVKTFRQNYDLLRHERLHMKRRSKQALNSY.

The segment at M1 to S41 is disordered. A compositionally biased stretch (basic and acidic residues) spans A11–K20. A Glycyl lysine isopeptide (Lys-Gly) (interchain with G-Cter in SUMO2) cross-link involves residue K13. Positions G26–P38 are enriched in pro residues. The SCAN box domain maps to R42–P124. Residues D141–A167 form a disordered region. Position 182 is a phosphoserine (S182). The region spanning S220–A294 is the KRAB domain. A disordered region spans residues S358–E397. Residues E373 to H383 show a composition bias toward basic and acidic residues. Residues A387 to E397 show a composition bias toward polar residues. Residues Y405–R427 form a C2H2-type 1; degenerate zinc finger. 2 consecutive C2H2-type zinc fingers follow at residues H433–H455 and Y461–H483. Residues H483 to G506 form a disordered region. A Glycyl lysine isopeptide (Lys-Gly) (interchain with G-Cter in SUMO2) cross-link involves residue K494. 2 C2H2-type zinc fingers span residues F520 to H543 and F551 to H573. Residues K575–K579 carry the Nuclear localization signal motif.

This sequence belongs to the krueppel C2H2-type zinc-finger protein family. As to quaternary structure, interacts (via zinc-fingers) with JARID2. Interacts with NSD1.

It is found in the nucleus. In terms of biological role, DNA-binding transcription factor that can both act as an activator and a repressor. This is Zinc finger protein 496 (Znf496) from Mus musculus (Mouse).